The sequence spans 317 residues: Anamorsin homolog 2 (317 aa).

Residues 1–162 (MAKKVGVLLF…KPSWDSASVF (162 aa)) are N-terminal SAM-like domain. The interval 163-229 (QLRKGSSQKG…EDDLLTEEDL (67 aa)) is linker. Positions 240, 247, 250, and 252 each coordinate [2Fe-2S] cluster. Positions 240 to 252 (CAPTKKACKNCTC) are fe-S binding site A. Residues C278, C281, C289, and C292 each contribute to the [4Fe-4S] cluster site. Short sequence motifs (cx2C motif) lie at residues 278–281 (CGSC) and 289–292 (CAGC). A fe-S binding site B region spans residues 278-292 (CGSCGLGDAFRCAGC).

It belongs to the anamorsin family. Monomer. The cofactor is [2Fe-2S] cluster. [4Fe-4S] cluster serves as cofactor.

It is found in the cytoplasm. The protein localises to the mitochondrion intermembrane space. Its function is as follows. Component of the cytosolic iron-sulfur (Fe-S) protein assembly (CIA) machinery. Required for the maturation of extramitochondrial Fe-S proteins. Part of an electron transfer chain functioning in an early step of cytosolic Fe-S biogenesis, facilitating the de novo assembly of a [4Fe-4S] cluster on the cytosolic Fe-S scaffold complex. Electrons are transferred from NADPH via a FAD- and FMN-containing diflavin oxidoreductase. Together with the diflavin oxidoreductase, also required for the assembly of the diferric tyrosyl radical cofactor of ribonucleotide reductase (RNR), probably by providing electrons for reduction during radical cofactor maturation in the catalytic small subunit. In Physcomitrium patens (Spreading-leaved earth moss), this protein is Anamorsin homolog 2.